A 264-amino-acid chain; its full sequence is Thiazole synthase (264 aa).

The Schiff-base intermediate with DXP role is filled by lysine 106. Residues glycine 167, 193 to 194, and 215 to 216 each bind 1-deoxy-D-xylulose 5-phosphate; these read AG and NS.

The protein belongs to the ThiG family. Homotetramer. Forms heterodimers with either ThiH or ThiS.

The protein resides in the cytoplasm. It catalyses the reaction [ThiS sulfur-carrier protein]-C-terminal-Gly-aminoethanethioate + 2-iminoacetate + 1-deoxy-D-xylulose 5-phosphate = [ThiS sulfur-carrier protein]-C-terminal Gly-Gly + 2-[(2R,5Z)-2-carboxy-4-methylthiazol-5(2H)-ylidene]ethyl phosphate + 2 H2O + H(+). It participates in cofactor biosynthesis; thiamine diphosphate biosynthesis. In terms of biological role, catalyzes the rearrangement of 1-deoxy-D-xylulose 5-phosphate (DXP) to produce the thiazole phosphate moiety of thiamine. Sulfur is provided by the thiocarboxylate moiety of the carrier protein ThiS. In vitro, sulfur can be provided by H(2)S. This chain is Thiazole synthase, found in Stutzerimonas stutzeri (strain A1501) (Pseudomonas stutzeri).